Reading from the N-terminus, the 865-residue chain is Protein translocase subunit SecA (865 aa).

ATP contacts are provided by residues glutamine 93, 111 to 115 (GEGKT), and aspartate 501. Residues cysteine 841, cysteine 843, cysteine 852, and cysteine 853 each coordinate Zn(2+).

It belongs to the SecA family. As to quaternary structure, monomer and homodimer. Part of the essential Sec protein translocation apparatus which comprises SecA, SecYEG and auxiliary proteins SecDF-YajC and YidC. The cofactor is Zn(2+).

The protein localises to the cell inner membrane. The protein resides in the cytoplasm. It carries out the reaction ATP + H2O + cellular proteinSide 1 = ADP + phosphate + cellular proteinSide 2.. Functionally, part of the Sec protein translocase complex. Interacts with the SecYEG preprotein conducting channel. Has a central role in coupling the hydrolysis of ATP to the transfer of proteins into and across the cell membrane, serving as an ATP-driven molecular motor driving the stepwise translocation of polypeptide chains across the membrane. The sequence is that of Protein translocase subunit SecA from Helicobacter pylori (strain HPAG1).